We begin with the raw amino-acid sequence, 321 residues long: Methenyltetrahydromethanopterin cyclohydrolase (321 aa).

Belongs to the MCH family.

The protein localises to the cytoplasm. The enzyme catalyses 5,10-methenyl-5,6,7,8-tetrahydromethanopterin + H2O = N(5)-formyl-5,6,7,8-tetrahydromethanopterin + H(+). It participates in one-carbon metabolism; methanogenesis from CO(2); 5,10-methenyl-5,6,7,8-tetrahydromethanopterin from CO(2): step 3/3. Catalyzes the reversible interconversion of 5-formyl-H(4)MPT to methenyl-H(4)MPT(+). This is Methenyltetrahydromethanopterin cyclohydrolase (mch) from Methanosarcina barkeri (strain Fusaro / DSM 804).